The sequence spans 206 residues: Putative metal transport protein HI_1621 (206 aa).

A run of 6 helical transmembrane segments spans residues 6–26 (GVLH…GIAV), 38–58 (LTAL…PVGI), 72–92 (FLGW…VIFF), 94–114 (FGGF…AVIA), 136–156 (IGAG…VLML), and 165–185 (LVWL…IISV).

The protein belongs to the CbiM family.

The protein localises to the cell membrane. May be involved in metal transport. The polypeptide is Putative metal transport protein HI_1621 (Haemophilus influenzae (strain ATCC 51907 / DSM 11121 / KW20 / Rd)).